Reading from the N-terminus, the 126-residue chain is Holo-[acyl-carrier-protein] synthase (126 aa).

Mg(2+) is bound by residues Asp-9 and Glu-58.

The protein belongs to the P-Pant transferase superfamily. AcpS family. Mg(2+) is required as a cofactor.

It localises to the cytoplasm. It catalyses the reaction apo-[ACP] + CoA = holo-[ACP] + adenosine 3',5'-bisphosphate + H(+). In terms of biological role, transfers the 4'-phosphopantetheine moiety from coenzyme A to a Ser of acyl-carrier-protein. The sequence is that of Holo-[acyl-carrier-protein] synthase from Cronobacter sakazakii (strain ATCC BAA-894) (Enterobacter sakazakii).